A 544-amino-acid polypeptide reads, in one-letter code: Putative ligase Rv1013 (544 aa).

Residue K528 forms an Isoglutamyl lysine isopeptide (Lys-Gln) (interchain with Q-Cter in protein Pup) linkage.

The protein belongs to the ATP-dependent AMP-binding enzyme family. In terms of processing, pupylated at Lys-528 by the prokaryotic ubiquitin-like protein Pup, which probably leads to its degradation by the proteasome.

In Mycobacterium tuberculosis (strain ATCC 25618 / H37Rv), this protein is Putative ligase Rv1013 (pks16).